We begin with the raw amino-acid sequence, 524 residues long: Bifunctional purine biosynthesis protein PurH (524 aa).

An MGS-like domain is found at 1–144 (MTRRALVSVS…KNSAHVGVVV (144 aa)).

It belongs to the PurH family.

It carries out the reaction (6R)-10-formyltetrahydrofolate + 5-amino-1-(5-phospho-beta-D-ribosyl)imidazole-4-carboxamide = 5-formamido-1-(5-phospho-D-ribosyl)imidazole-4-carboxamide + (6S)-5,6,7,8-tetrahydrofolate. The enzyme catalyses IMP + H2O = 5-formamido-1-(5-phospho-D-ribosyl)imidazole-4-carboxamide. It functions in the pathway purine metabolism; IMP biosynthesis via de novo pathway; 5-formamido-1-(5-phospho-D-ribosyl)imidazole-4-carboxamide from 5-amino-1-(5-phospho-D-ribosyl)imidazole-4-carboxamide (10-formyl THF route): step 1/1. Its pathway is purine metabolism; IMP biosynthesis via de novo pathway; IMP from 5-formamido-1-(5-phospho-D-ribosyl)imidazole-4-carboxamide: step 1/1. This Anaeromyxobacter dehalogenans (strain 2CP-C) protein is Bifunctional purine biosynthesis protein PurH.